The chain runs to 344 residues: DNA-directed RNA polymerase subunit alpha (344 aa).

An alpha N-terminal domain (alpha-NTD) region spans residues 1-238 (MKVIKTAPLI…KQLGVFGERP (238 aa)). The interval 254–344 (AKDLSAKIES…EKLEDKGGND (91 aa)) is alpha C-terminal domain (alpha-CTD).

This sequence belongs to the RNA polymerase alpha chain family. In terms of assembly, homodimer. The RNAP catalytic core consists of 2 alpha, 1 beta, 1 beta' and 1 omega subunit. When a sigma factor is associated with the core the holoenzyme is formed, which can initiate transcription.

The catalysed reaction is RNA(n) + a ribonucleoside 5'-triphosphate = RNA(n+1) + diphosphate. In terms of biological role, DNA-dependent RNA polymerase catalyzes the transcription of DNA into RNA using the four ribonucleoside triphosphates as substrates. This is DNA-directed RNA polymerase subunit alpha from Helicobacter pylori (strain J99 / ATCC 700824) (Campylobacter pylori J99).